A 312-amino-acid chain; its full sequence is Malate dehydrogenase (312 aa).

NAD(+)-binding positions include 7 to 13 and Asp34; that span reads GAAGGIG. Residues Arg81 and Arg87 each coordinate substrate. Residues Asn94 and 117–119 each bind NAD(+); that span reads ITN. Substrate is bound by residues Asn119 and Arg153. His177 (proton acceptor) is an active-site residue. Met227 is a binding site for NAD(+).

This sequence belongs to the LDH/MDH superfamily. MDH type 1 family. In terms of assembly, homodimer.

It catalyses the reaction (S)-malate + NAD(+) = oxaloacetate + NADH + H(+). Its function is as follows. Catalyzes the reversible oxidation of malate to oxaloacetate. The polypeptide is Malate dehydrogenase (Escherichia fergusonii (strain ATCC 35469 / DSM 13698 / CCUG 18766 / IAM 14443 / JCM 21226 / LMG 7866 / NBRC 102419 / NCTC 12128 / CDC 0568-73)).